Here is a 334-residue protein sequence, read N- to C-terminus: Biotin synthase (334 aa).

The Radical SAM core domain occupies 55 to 285 (GSSGSIHACS…VHPRKIIKIA (231 aa)). [4Fe-4S] cluster is bound by residues cysteine 73, cysteine 77, and cysteine 80. 3 residues coordinate [2Fe-2S] cluster: cysteine 152, cysteine 213, and lysine 283.

Belongs to the radical SAM superfamily. Biotin synthase family. In terms of assembly, homodimer. The cofactor is [4Fe-4S] cluster. [2Fe-2S] cluster serves as cofactor.

The enzyme catalyses (4R,5S)-dethiobiotin + (sulfur carrier)-SH + 2 reduced [2Fe-2S]-[ferredoxin] + 2 S-adenosyl-L-methionine = (sulfur carrier)-H + biotin + 2 5'-deoxyadenosine + 2 L-methionine + 2 oxidized [2Fe-2S]-[ferredoxin]. It functions in the pathway cofactor biosynthesis; biotin biosynthesis; biotin from 7,8-diaminononanoate: step 2/2. Catalyzes the conversion of dethiobiotin (DTB) to biotin by the insertion of a sulfur atom into dethiobiotin via a radical-based mechanism. The chain is Biotin synthase from Chlorobium phaeobacteroides (strain DSM 266 / SMG 266 / 2430).